We begin with the raw amino-acid sequence, 571 residues long: S100P-binding protein (571 aa).

The segment covering 270–280 has biased composition (acidic residues); it reads SDIPFDGDIDE. Disordered regions lie at residues 270–312 and 356–385; these read SDIP…LESV and NGQNNSNKVPLPPSDTAPGPQLPADPCSQS. Over residues 299–309 the composition is skewed to polar residues; the sequence is TSESTPASSEL. The segment covering 365-378 has biased composition (pro residues); that stretch reads PLPPSDTAPGPQLP.

Its subcellular location is the nucleus. This chain is S100P-binding protein (s100pbp), found in Xenopus tropicalis (Western clawed frog).